The primary structure comprises 297 residues: Dipicolinate synthase subunit A (297 aa).

Residues 164-165, Arg-185, Thr-203, 242-244, and 264-267 each bind NADP(+); these read RT, LAS, and APGL.

As to quaternary structure, dipicolinate synthase likely consists of DpaA and DpaB, since both proteins are required for DPA synthesis.

The catalysed reaction is (S)-2,3-dihydrodipicolinate + NADP(+) = dipicolinate + NADPH + H(+). Together with DpaB, catalyzes the conversion of dihydrodipicolinate to dipicolinate (DPA), which constitutes up to 10% of the dry weight of the spore. In Bacillus subtilis (strain 168), this protein is Dipicolinate synthase subunit A (dpaA).